Consider the following 640-residue polypeptide: 1-deoxy-D-xylulose-5-phosphate synthase (640 aa).

Thiamine diphosphate is bound by residues H79 and 120 to 122 (AHA). D151 lines the Mg(2+) pocket. Residues 152–153 (GS), N180, Y287, and E369 contribute to the thiamine diphosphate site. N180 is a binding site for Mg(2+).

The protein belongs to the transketolase family. DXPS subfamily. As to quaternary structure, homodimer. Mg(2+) is required as a cofactor. The cofactor is thiamine diphosphate.

The enzyme catalyses D-glyceraldehyde 3-phosphate + pyruvate + H(+) = 1-deoxy-D-xylulose 5-phosphate + CO2. Its pathway is metabolic intermediate biosynthesis; 1-deoxy-D-xylulose 5-phosphate biosynthesis; 1-deoxy-D-xylulose 5-phosphate from D-glyceraldehyde 3-phosphate and pyruvate: step 1/1. Catalyzes the acyloin condensation reaction between C atoms 2 and 3 of pyruvate and glyceraldehyde 3-phosphate to yield 1-deoxy-D-xylulose-5-phosphate (DXP). In Hyphomonas neptunium (strain ATCC 15444), this protein is 1-deoxy-D-xylulose-5-phosphate synthase.